Here is a 271-residue protein sequence, read N- to C-terminus: Eukaryotic translation initiation factor 2 subunit beta (271 aa).

The C4-type zinc finger occupies 223 to 247; the sequence is CLGCQSPDTILSKENRLFFLRCEKC.

It belongs to the eIF-2-beta/eIF-5 family. As to quaternary structure, eukaryotic translation initiation factor 2 eIF2 is a heterotrimeric complex composed of an alpha, a beta and a gamma subunit.

The protein localises to the cytoplasm. It is found in the cytosol. Functionally, component of the eIF2 complex that functions in the early steps of protein synthesis by forming a ternary complex with GTP and initiator tRNA. This complex binds to a 40S ribosomal subunit, followed by mRNA binding to form a 43S pre-initiation complex (43S PIC). Junction of the 60S ribosomal subunit to form the 80S initiation complex is preceded by hydrolysis of the GTP bound to eIF2 and release of an eIF2-GDP binary complex. In order for eIF2 to recycle and catalyze another round of initiation, the GDP bound to eIF2 must exchange with GTP by way of a reaction catalyzed by eIF2B. This is Eukaryotic translation initiation factor 2 subunit beta from Malus domestica (Apple).